Here is a 307-residue protein sequence, read N- to C-terminus: tRNA dimethylallyltransferase (307 aa).

11 to 18 contacts ATP; it reads GPTGSGKT. 13-18 is a substrate binding site; sequence TGSGKT. The tract at residues 36-39 is interaction with substrate tRNA; it reads DSVA.

Belongs to the IPP transferase family. Monomer. It depends on Mg(2+) as a cofactor.

The enzyme catalyses adenosine(37) in tRNA + dimethylallyl diphosphate = N(6)-dimethylallyladenosine(37) in tRNA + diphosphate. Functionally, catalyzes the transfer of a dimethylallyl group onto the adenine at position 37 in tRNAs that read codons beginning with uridine, leading to the formation of N6-(dimethylallyl)adenosine (i(6)A). The polypeptide is tRNA dimethylallyltransferase (Koribacter versatilis (strain Ellin345)).